A 375-amino-acid chain; its full sequence is Alcohol dehydrogenase 1 (375 aa).

Serine 2 bears the N-acetylserine mark. Zn(2+)-binding residues include cysteine 47, histidine 68, cysteine 98, cysteine 101, cysteine 104, cysteine 112, and cysteine 175. Residues 200-205 (GLGGVG), aspartate 224, and lysine 229 each bind NAD(+). Lysine 234 is modified (N6-succinyllysine). Residue 293-295 (VGV) participates in NAD(+) binding. The residue at position 340 (lysine 340) is an N6-succinyllysine. Position 370 (arginine 370) interacts with NAD(+).

Belongs to the zinc-containing alcohol dehydrogenase family. Class-I subfamily. As to quaternary structure, dimer of identical or non-identical chains of three types (A, B, C), which are coded by 3 separate genes at different loci. It depends on Zn(2+) as a cofactor. Expressed at high levels in the liver, small intestine and eye, at moderate levels in kidney, ovary and uterus, and at low levels in the spinal cord, thymus, heart, stomach mucosa, skin and testis.

Its subcellular location is the cytoplasm. The catalysed reaction is a primary alcohol + NAD(+) = an aldehyde + NADH + H(+). It carries out the reaction a secondary alcohol + NAD(+) = a ketone + NADH + H(+). In Mus musculus (Mouse), this protein is Alcohol dehydrogenase 1 (Adh1).